The chain runs to 80 residues: Putative membrane protein insertion efficiency factor (80 aa).

The protein belongs to the UPF0161 family.

It is found in the cell inner membrane. Functionally, could be involved in insertion of integral membrane proteins into the membrane. This is Putative membrane protein insertion efficiency factor from Kosmotoga olearia (strain ATCC BAA-1733 / DSM 21960 / TBF 19.5.1).